Reading from the N-terminus, the 162-residue chain is UPF0305 protein MmarC6_0221 (162 aa).

It belongs to the UPF0305 family.

The polypeptide is UPF0305 protein MmarC6_0221 (Methanococcus maripaludis (strain C6 / ATCC BAA-1332)).